Here is a 290-residue protein sequence, read N- to C-terminus: MNIAANIADDPETGDIDDGAGPALFADAPRSVSFNKLRKRLLRQVRQAFDDFDMLKGQKRWLVGLSGGKDSYGLLALLLDLKWRGLLSVELIACNLDQGQPNFPKHVLPDYLTKIGVRHRIEYRDTYSIVKEKVPEGATYCSLCSRLRRGNLYRIAREEGCDALVLGHHREDILETFFMNFFHGGRLASMPAKLLNDEGDLMVLRPLAYAAEDDLARFAAAMQFPIIPCDLCGSQDGLQRNAMKDMLADIERRMPGRKDTMLRALSHVNPSHLLDPKLFDFSSLGVTDPS.

A PP-loop motif motif is present at residues 66–71 (SGGKDS). [4Fe-4S] cluster is bound by residues C141, C144, and C232.

It belongs to the TtcA family. In terms of assembly, homodimer. Mg(2+) serves as cofactor. It depends on [4Fe-4S] cluster as a cofactor.

Its subcellular location is the cytoplasm. It carries out the reaction cytidine(32) in tRNA + S-sulfanyl-L-cysteinyl-[cysteine desulfurase] + AH2 + ATP = 2-thiocytidine(32) in tRNA + L-cysteinyl-[cysteine desulfurase] + A + AMP + diphosphate + H(+). It participates in tRNA modification. Functionally, catalyzes the ATP-dependent 2-thiolation of cytidine in position 32 of tRNA, to form 2-thiocytidine (s(2)C32). The sulfur atoms are provided by the cysteine/cysteine desulfurase (IscS) system. In Rhizobium etli (strain ATCC 51251 / DSM 11541 / JCM 21823 / NBRC 15573 / CFN 42), this protein is tRNA-cytidine(32) 2-sulfurtransferase.